Consider the following 110-residue polypeptide: UPF0122 protein lmo1802 (110 aa).

The protein belongs to the UPF0122 family.

In terms of biological role, might take part in the signal recognition particle (SRP) pathway. This is inferred from the conservation of its genetic proximity to ftsY/ffh. May be a regulatory protein. The polypeptide is UPF0122 protein lmo1802 (Listeria monocytogenes serovar 1/2a (strain ATCC BAA-679 / EGD-e)).